Reading from the N-terminus, the 595-residue chain is Proline--tRNA ligase (595 aa).

A disordered region spans residues 1-22 (MKMSTMFGATLHTAPGRSESEG).

It belongs to the class-II aminoacyl-tRNA synthetase family. ProS type 1 subfamily. In terms of assembly, homodimer.

It localises to the cytoplasm. It catalyses the reaction tRNA(Pro) + L-proline + ATP = L-prolyl-tRNA(Pro) + AMP + diphosphate. Functionally, catalyzes the attachment of proline to tRNA(Pro) in a two-step reaction: proline is first activated by ATP to form Pro-AMP and then transferred to the acceptor end of tRNA(Pro). As ProRS can inadvertently accommodate and process non-cognate amino acids such as alanine and cysteine, to avoid such errors it has two additional distinct editing activities against alanine. One activity is designated as 'pretransfer' editing and involves the tRNA(Pro)-independent hydrolysis of activated Ala-AMP. The other activity is designated 'posttransfer' editing and involves deacylation of mischarged Ala-tRNA(Pro). The misacylated Cys-tRNA(Pro) is not edited by ProRS. The chain is Proline--tRNA ligase from Salinispora tropica (strain ATCC BAA-916 / DSM 44818 / JCM 13857 / NBRC 105044 / CNB-440).